The following is a 434-amino-acid chain: Beta-enolase (434 aa).

Alanine 2 carries the post-translational modification N-acetylalanine. Residue threonine 72 is modified to Phosphothreonine. Serine 83 and serine 157 each carry phosphoserine. Substrate contacts are provided by histidine 158 and glutamate 167. At serine 176 the chain carries Phosphoserine. Phosphothreonine is present on threonine 205. The Proton donor role is filled by glutamate 210. Residue threonine 229 is modified to Phosphothreonine. Tyrosine 236 bears the Phosphotyrosine mark. Mg(2+) is bound at residue aspartate 245. Serine 263 is modified (phosphoserine). Substrate contacts are provided by glutamate 293 and aspartate 318. Glutamate 293 and aspartate 318 together coordinate Mg(2+). The active-site Proton acceptor is the lysine 343. Substrate is bound by residues 370 to 373 (SHRS) and lysine 394.

Belongs to the enolase family. As to quaternary structure, mammalian enolase is composed of 3 isozyme subunits, alpha, beta and gamma, which can form homodimers or heterodimers which are cell-type and development-specific. Interacts with PNKD. Requires Mg(2+) as cofactor. As to expression, the alpha/alpha homodimer is expressed in embryo and in most adult tissues. The alpha/beta heterodimer and the beta/beta homodimer are found in striated muscle, and the alpha/gamma heterodimer and the gamma/gamma homodimer in neurons.

Its subcellular location is the cytoplasm. The catalysed reaction is (2R)-2-phosphoglycerate = phosphoenolpyruvate + H2O. It functions in the pathway carbohydrate degradation; glycolysis; pyruvate from D-glyceraldehyde 3-phosphate: step 4/5. In terms of biological role, glycolytic enzyme that catalyzes the conversion of 2-phosphoglycerate to phosphoenolpyruvate. Appears to have a function in striated muscle development and regeneration. The chain is Beta-enolase (ENO3) from Oryctolagus cuniculus (Rabbit).